The sequence spans 193 residues: uncharacterized protein (193 aa).

The signal sequence occupies residues 1-14 (MSTSLLFSLSPSSS).

This is an uncharacterized protein from Saccharomyces cerevisiae (strain ATCC 204508 / S288c) (Baker's yeast).